Consider the following 323-residue polypeptide: Glyoxylate/hydroxypyruvate reductase B (323 aa).

Catalysis depends on residues Arg237 and Glu266. His285 (proton donor) is an active-site residue.

It belongs to the D-isomer specific 2-hydroxyacid dehydrogenase family. GhrB subfamily. As to quaternary structure, homodimer.

The protein resides in the cytoplasm. It carries out the reaction glycolate + NADP(+) = glyoxylate + NADPH + H(+). The catalysed reaction is (R)-glycerate + NAD(+) = 3-hydroxypyruvate + NADH + H(+). It catalyses the reaction (R)-glycerate + NADP(+) = 3-hydroxypyruvate + NADPH + H(+). In terms of biological role, catalyzes the NADPH-dependent reduction of glyoxylate and hydroxypyruvate into glycolate and glycerate, respectively. This Klebsiella pneumoniae (strain 342) protein is Glyoxylate/hydroxypyruvate reductase B.